We begin with the raw amino-acid sequence, 271 residues long: Chymotrypsin-like elastase family member 2A (271 aa).

Positions 1 to 16 (MIRTLLLSALVAGALS) are cleaved as a signal peptide. Positions 17–30 (CGYPTYEVQHDVSR) are cleaved as a propeptide — activation peptide. The Peptidase S1 domain occupies 31-269 (VVGGQEASPN…YIDWINSVIA (239 aa)). Cysteine 60 and cysteine 76 form a disulfide bridge. Residues histidine 75 and aspartate 123 each act as charge relay system in the active site. Disulfide bonds link cysteine 157–cysteine 224, cysteine 188–cysteine 204, and cysteine 214–cysteine 245. Residue serine 218 is the Charge relay system of the active site.

It belongs to the peptidase S1 family. Elastase subfamily. As to quaternary structure, interacts with CPA1. Interacts with SERPINA1. In terms of tissue distribution, pancreas.

The protein resides in the secreted. It carries out the reaction Preferential cleavage: Leu-|-Xaa, Met-|-Xaa and Phe-|-Xaa. Hydrolyzes elastin.. Functionally, elastase that enhances insulin signaling and might have a physiologic role in cellular glucose metabolism. Circulates in plasma and reduces platelet hyperactivation, triggers both insulin secretion and degradation, and increases insulin sensitivity. This chain is Chymotrypsin-like elastase family member 2A (Cela2a), found in Rattus norvegicus (Rat).